The following is a 740-amino-acid chain: Arf-GAP with coiled-coil, ANK repeat and PH domain-containing protein 1 (740 aa).

One can recognise a BAR domain in the interval 1 to 226; the sequence is MTVKLDFEEC…RKELGAQLHQ (226 aa). The interval 1–382 is required for formation of endosomal tubules when overexpressed with PIP5K1C; it reads MTVKLDFEEC…RGPGQGSGHL (382 aa). One can recognise a PH domain in the interval 265–360; it reads GLVMEGHLFK…WVSAVQSSIA (96 aa). The Arf-GAP domain occupies 405-527; it reads GHVVAQVQSV…KFLTKLPEIR (123 aa). A required for interaction with GULP1 region spans residues 405-740; that stretch reads GHVVAQVQSV…SRRSHDLHTL (336 aa). The C4-type zinc finger occupies 420–443; that stretch reads CCDCREPAPEWASINLGVTLCIQC. Tyr485 carries the 3'-nitrotyrosine modification. The interval 525 to 566 is prevents interaction with ITGB1 when S-554 is not phosphorylated; it reads EIRGRRGGRGRPRGQPPVPPKPSIRPRPGSLRSKPEPPSEDL. The tract at residues 525-581 is disordered; the sequence is EIRGRRGGRGRPRGQPPVPPKPSIRPRPGSLRSKPEPPSEDLGSLHPGALLFRASGH. Pro residues predominate over residues 538-549; sequence GQPPVPPKPSIR. Ser554 bears the Phosphoserine; by PKB mark. ANK repeat units lie at residues 606-635, 639-668, and 672-702; these read DNAT…NVNQ, AGRG…DLGA, and EGRD…EAEA.

Banana-shaped homodimer laterally assembling into tetramers, the tetramers further pack helically onto the membrane. Interacts with GTP-bound ARF6. Interacts with third cytoplasmic loop of SLC2A4/GLUT4. Interacts with CLTC. Interacts with GULP1. Forms a complex with GDP-bound ARF6 and GULP1. Interacts with ITGB1; required for ITGB1 recycling. In terms of processing, phosphorylation at Ser-554 by PKB is required for interaction with ITGB1, export of ITGB1 from recycling endosomes to the cell surface and ITGB1-dependent cell migration. In terms of tissue distribution, highest level in lung and spleen. Low level in heart, kidney, liver and pancreas.

The protein localises to the recycling endosome membrane. GAP activity stimulated by phosphatidylinositol 4,5-bisphosphate (PIP2) and phosphatidic acid. GTPase-activating protein (GAP) for ADP ribosylation factor 6 (ARF6) required for clathrin-dependent export of proteins from recycling endosomes to trans-Golgi network and cell surface. Required for regulated export of ITGB1 from recycling endosomes to the cell surface and ITGB1-dependent cell migration. This is Arf-GAP with coiled-coil, ANK repeat and PH domain-containing protein 1 (ACAP1) from Homo sapiens (Human).